A 444-amino-acid polypeptide reads, in one-letter code: Ribosomal protein uS12 methylthiotransferase RimO (444 aa).

The region spanning 4 to 118 (IKYGVVSLGC…LSDAIKKSIE (115 aa)) is the MTTase N-terminal domain. [4Fe-4S] cluster contacts are provided by cysteine 13, cysteine 48, cysteine 81, cysteine 155, cysteine 159, and cysteine 162. The Radical SAM core domain occupies 141–373 (TTQKHYAYLR…MQRDIVKSIN (233 aa)). The TRAM domain maps to 374 to 440 (ADKVNKVYKV…EYDLIGVVCD (67 aa)).

The protein belongs to the methylthiotransferase family. RimO subfamily. [4Fe-4S] cluster is required as a cofactor.

The protein resides in the cytoplasm. The enzyme catalyses L-aspartate(89)-[ribosomal protein uS12]-hydrogen + (sulfur carrier)-SH + AH2 + 2 S-adenosyl-L-methionine = 3-methylsulfanyl-L-aspartate(89)-[ribosomal protein uS12]-hydrogen + (sulfur carrier)-H + 5'-deoxyadenosine + L-methionine + A + S-adenosyl-L-homocysteine + 2 H(+). Functionally, catalyzes the methylthiolation of an aspartic acid residue of ribosomal protein uS12. The chain is Ribosomal protein uS12 methylthiotransferase RimO from Clostridium tetani (strain Massachusetts / E88).